The primary structure comprises 622 residues: MVPVENTEGPNLLNQKGREAETEGSCGASGGGHPACAGGPSMFTFLTSVTAAISGLLVGYELGLISGALLQIRTLLALTCHEQEMVVSSLLIGAFLASLTGGVLIDRYGRRLAIILSSCLLGLGSLVLIMSLSYTLLIMGRVAIGVSISLSSIATCVYIAEIAPQHRRGLLVSLNELMIVTGILFAYISNYAFANISNGWKYMFGLVIPLGVLQAIAMYFLPPSPRFLVMKGQEESAGKVLRKLRVISDTTEELTLIKSSLKDEYQYSFWDLFRSKDNMRTRILIGLTLVFFVQTTGQPNILFYASTVLKSVGFQSNEAASLASTGVGVVKVVSTIPATLLVDHIGSKTFLCIGSSVMSASLLTMGIVNLNINMNFTNICRSHSLLNQSLEEFVFYATGNLSISNSSLREHFKRITPYSKGSFMPMGNGMEPKGEMTFTSSLPNAGLSRTEHQGVTDTAVVPAAYKWLSLASLLVYVAAFSIGLGPMPWLVLSEIFPGGIRGRAMALTSSMNWGVNLLISLTFLTVTDLIGLSWVCFIYTIMSLASLAFVVLFIPETKGCSLEQISVELAKANYVKNNICFMSHHQEELVPTQLQKRKPQEQLPECNHLCGRGQSQRPSPDT.

A disordered region spans residues 1–26 (MVPVENTEGPNLLNQKGREAETEGSC). Residues 1 to 44 (MVPVENTEGPNLLNQKGREAETEGSCGASGGGHPACAGGPSMFT) are Cytoplasmic-facing. The helical transmembrane segment at 45-65 (FLTSVTAAISGLLVGYELGLI) threads the bilayer. Over 66–84 (SGALLQIRTLLALTCHEQE) the chain is Extracellular. A helical membrane pass occupies residues 85-105 (MVVSSLLIGAFLASLTGGVLI). Residues 106–111 (DRYGRR) are Cytoplasmic-facing. Residues 112 to 132 (LAIILSSCLLGLGSLVLIMSL) traverse the membrane as a helical segment. Residues 133-141 (SYTLLIMGR) are Extracellular-facing. Residues 142–162 (VAIGVSISLSSIATCVYIAEI) form a helical membrane-spanning segment. Topologically, residues 163-168 (APQHRR) are cytoplasmic. The helical transmembrane segment at 169–189 (GLLVSLNELMIVTGILFAYIS) threads the bilayer. Residues 190–201 (NYAFANISNGWK) lie on the Extracellular side of the membrane. The N-linked (GlcNAc...) asparagine glycan is linked to asparagine 195. Residues 202-222 (YMFGLVIPLGVLQAIAMYFLP) traverse the membrane as a helical segment. The Cytoplasmic segment spans residues 223 to 282 (PSPRFLVMKGQEESAGKVLRKLRVISDTTEELTLIKSSLKDEYQYSFWDLFRSKDNMRTR). A helical membrane pass occupies residues 283–303 (ILIGLTLVFFVQTTGQPNILF). The Extracellular portion of the chain corresponds to 304–321 (YASTVLKSVGFQSNEAAS). The chain crosses the membrane as a helical span at residues 322-342 (LASTGVGVVKVVSTIPATLLV). Residues 343–349 (DHIGSKT) lie on the Cytoplasmic side of the membrane. A helical membrane pass occupies residues 350-370 (FLCIGSSVMSASLLTMGIVNL). Over 371–471 (NINMNFTNIC…PAAYKWLSLA (101 aa)) the chain is Extracellular. 4 N-linked (GlcNAc...) asparagine glycosylation sites follow: asparagine 375, asparagine 387, asparagine 400, and asparagine 405. Residues 472–492 (SLLVYVAAFSIGLGPMPWLVL) traverse the membrane as a helical segment. Over 493–503 (SEIFPGGIRGR) the chain is Cytoplasmic. Residues 504-524 (AMALTSSMNWGVNLLISLTFL) form a helical membrane-spanning segment. The Extracellular segment spans residues 525–533 (TVTDLIGLS). A helical transmembrane segment spans residues 534 to 554 (WVCFIYTIMSLASLAFVVLFI). Residues 555–622 (PETKGCSLEQ…GQSQRPSPDT (68 aa)) are Cytoplasmic-facing.

This sequence belongs to the major facilitator superfamily. Sugar transporter (TC 2.A.1.1) family. Glucose transporter subfamily. In terms of tissue distribution, expressed in skeletal muscle, heart, brain, kidney, spleen, adipose tissues and to a lesser extent in small intestine and lung.

It localises to the cell membrane. Its subcellular location is the endomembrane system. The protein resides in the cytoplasm. The protein localises to the perinuclear region. It carries out the reaction D-glucose(out) = D-glucose(in). Functionally, insulin-independent facilitative glucose transporter. The protein is Solute carrier family 2, facilitated glucose transporter member 12 of Mus musculus (Mouse).